We begin with the raw amino-acid sequence, 215 residues long: UPF0488 protein C8orf33 homolog (215 aa).

Disordered stretches follow at residues 1-72 (MLED…DEQL), 87-111 (LRTQKTSSKQREEASRALKTLRSSK), and 158-199 (CKPV…DTKP). A compositionally biased stretch (basic residues) spans 29 to 39 (AKKHKKKKKKK). Residues 40 to 63 (AGEGKDDQQRETKTTEGETAKQET) are compositionally biased toward basic and acidic residues. 2 stretches are compositionally biased toward basic and acidic residues: residues 167–178 (ERNTQPKNKTDG) and 188–199 (TNEHTKTEDTKP).

It belongs to the UPF0488 family.

In Danio rerio (Zebrafish), this protein is UPF0488 protein C8orf33 homolog.